A 103-amino-acid chain; its full sequence is Putative membrane protein insertion efficiency factor (103 aa).

The tract at residues 68-103 (HEGGYDPVPLAKQDAKPENNSESESLLNQPTETKSL) is disordered. A compositionally biased stretch (polar residues) spans 87 to 103 (NSESESLLNQPTETKSL).

It belongs to the UPF0161 family.

Its subcellular location is the cell inner membrane. Could be involved in insertion of integral membrane proteins into the membrane. In Idiomarina loihiensis (strain ATCC BAA-735 / DSM 15497 / L2-TR), this protein is Putative membrane protein insertion efficiency factor.